We begin with the raw amino-acid sequence, 280 residues long: F420-dependent methylenetetrahydromethanopterin dehydrogenase (280 aa).

Belongs to the MTD family.

The enzyme catalyses 5,10-methylenetetrahydromethanopterin + oxidized coenzyme F420-(gamma-L-Glu)(n) + 2 H(+) = 5,10-methenyl-5,6,7,8-tetrahydromethanopterin + reduced coenzyme F420-(gamma-L-Glu)(n). Its pathway is one-carbon metabolism; methanogenesis from CO(2); 5,10-methylene-5,6,7,8-tetrahydromethanopterin from 5,10-methenyl-5,6,7,8-tetrahydromethanopterin (coenzyme F420 route): step 1/1. In terms of biological role, catalyzes the reversible reduction of methenyl-H(4)MPT(+) to methylene-H(4)MPT. This is F420-dependent methylenetetrahydromethanopterin dehydrogenase from Methanoculleus marisnigri (strain ATCC 35101 / DSM 1498 / JR1).